The primary structure comprises 418 residues: Serine hydroxymethyltransferase (418 aa).

(6S)-5,6,7,8-tetrahydrofolate contacts are provided by residues L117 and 121–123; that span reads GHL. Residue K225 is modified to N6-(pyridoxal phosphate)lysine.

The protein belongs to the SHMT family. As to quaternary structure, homodimer. It depends on pyridoxal 5'-phosphate as a cofactor.

The protein localises to the cytoplasm. It catalyses the reaction (6R)-5,10-methylene-5,6,7,8-tetrahydrofolate + glycine + H2O = (6S)-5,6,7,8-tetrahydrofolate + L-serine. It participates in one-carbon metabolism; tetrahydrofolate interconversion. The protein operates within amino-acid biosynthesis; glycine biosynthesis; glycine from L-serine: step 1/1. In terms of biological role, catalyzes the reversible interconversion of serine and glycine with tetrahydrofolate (THF) serving as the one-carbon carrier. This reaction serves as the major source of one-carbon groups required for the biosynthesis of purines, thymidylate, methionine, and other important biomolecules. Also exhibits THF-independent aldolase activity toward beta-hydroxyamino acids, producing glycine and aldehydes, via a retro-aldol mechanism. This chain is Serine hydroxymethyltransferase, found in Mycoplasma mobile (strain ATCC 43663 / 163K / NCTC 11711) (Mesomycoplasma mobile).